The primary structure comprises 121 residues: Putative iron-sulfur cluster insertion protein ErpA (121 aa).

Iron-sulfur cluster-binding residues include C49, C113, and C115.

The protein belongs to the HesB/IscA family. In terms of assembly, homodimer. Iron-sulfur cluster serves as cofactor.

In terms of biological role, required for insertion of 4Fe-4S clusters. This chain is Putative iron-sulfur cluster insertion protein ErpA, found in Paraburkholderia phymatum (strain DSM 17167 / CIP 108236 / LMG 21445 / STM815) (Burkholderia phymatum).